Consider the following 360-residue polypeptide: Peptide chain release factor 1 (360 aa).

Position 237 is an N5-methylglutamine (Gln237).

The protein belongs to the prokaryotic/mitochondrial release factor family. In terms of processing, methylated by PrmC. Methylation increases the termination efficiency of RF1.

It localises to the cytoplasm. Functionally, peptide chain release factor 1 directs the termination of translation in response to the peptide chain termination codons UAG and UAA. This chain is Peptide chain release factor 1, found in Pseudomonas putida (strain ATCC 47054 / DSM 6125 / CFBP 8728 / NCIMB 11950 / KT2440).